A 284-amino-acid polypeptide reads, in one-letter code: Bifunctional protein FolD (284 aa).

NADP(+) contacts are provided by residues G165–S167 and S190.

This sequence belongs to the tetrahydrofolate dehydrogenase/cyclohydrolase family. In terms of assembly, homodimer.

The catalysed reaction is (6R)-5,10-methylene-5,6,7,8-tetrahydrofolate + NADP(+) = (6R)-5,10-methenyltetrahydrofolate + NADPH. It catalyses the reaction (6R)-5,10-methenyltetrahydrofolate + H2O = (6R)-10-formyltetrahydrofolate + H(+). Its pathway is one-carbon metabolism; tetrahydrofolate interconversion. Catalyzes the oxidation of 5,10-methylenetetrahydrofolate to 5,10-methenyltetrahydrofolate and then the hydrolysis of 5,10-methenyltetrahydrofolate to 10-formyltetrahydrofolate. The polypeptide is Bifunctional protein FolD (Streptococcus equi subsp. equi (strain 4047)).